Here is a 515-residue protein sequence, read N- to C-terminus: Lysosomal acid glucosylceramidase (515 aa).

A signal peptide spans 1-19; the sequence is MAARLIGFFLFQAVSWAYG. 2 cysteine pairs are disulfide-bonded: Cys-23-Cys-35 and Cys-37-Cys-42. N-linked (GlcNAc...) asparagine glycosylation is found at Asn-38 and Asn-78. Residue Asn-165 is glycosylated (N-linked (GlcNAc...) (high mannose) asparagine). Glu-254 functions as the Proton donor in the catalytic mechanism. A glycan (N-linked (GlcNAc...) asparagine) is linked at Asn-289. Catalysis depends on Glu-358, which acts as the Nucleophile. Asn-480 carries N-linked (GlcNAc...) asparagine glycosylation.

The protein belongs to the glycosyl hydrolase 30 family. Interacts with saposin-C. Interacts with SCARB2. Interacts with TCP1. Interacts with GRN; this interaction prevents aggregation of GBA1-SCARB2 complex via interaction with HSPA1A upon stress.

It is found in the lysosome membrane. It catalyses the reaction a beta-D-glucosyl-(1&lt;-&gt;1')-N-acylsphing-4-enine + H2O = an N-acylsphing-4-enine + D-glucose. It carries out the reaction a beta-D-galactosyl-(1&lt;-&gt;1')-N-acylsphing-4-enine + H2O = an N-acylsphing-4-enine + D-galactose. The enzyme catalyses cholesteryl 3-beta-D-glucoside + H2O = cholesterol + D-glucose. The catalysed reaction is a beta-D-glucosyl-(1&lt;-&gt;1')-N-acylsphing-4-enine + cholesterol = cholesteryl 3-beta-D-glucoside + an N-acylsphing-4-enine. It catalyses the reaction beta-D-glucosyl-(1&lt;-&gt;1')-N-hexadecanoylsphing-4-enine + cholesterol = cholesteryl 3-beta-D-glucoside + N-hexadecanoylsphing-4-enine. It carries out the reaction beta-D-glucosyl-N-(9Z-octadecenoyl)-sphing-4E-enine + cholesterol = N-(9Z-octadecenoyl)-sphing-4-enine + cholesteryl 3-beta-D-glucoside. The enzyme catalyses beta-D-glucosyl-N-octanoylsphing-4E-enine + cholesterol = N-octanoylsphing-4-enine + cholesteryl 3-beta-D-glucoside. The catalysed reaction is beta-D-glucosyl-N-dodecanoylsphing-4-enine + cholesterol = N-dodecanoylsphing-4-enine + cholesteryl 3-beta-D-glucoside. It catalyses the reaction beta-D-glucosyl-(1&lt;-&gt;1)-N-octadecanoylsphing-4-enine + cholesterol = N-octadecanoylsphing-4-enine + cholesteryl 3-beta-D-glucoside. It carries out the reaction beta-D-glucosyl-(1&lt;-&gt;1')-N-(15Z-tetracosenoyl)-sphing-4-enine + cholesterol = N-(15Z-tetracosenoyl)-sphing-4-enine + cholesteryl 3-beta-D-glucoside. The enzyme catalyses a beta-D-galactosyl-(1&lt;-&gt;1')-N-acylsphing-4-enine + cholesterol = cholesteryl 3-beta-D-galactoside + an N-acylsphing-4-enine. The catalysed reaction is 1-(beta-D-galactosyl)-N-dodecanoylsphing-4-enine + cholesterol = cholesteryl 3-beta-D-galactoside + N-dodecanoylsphing-4-enine. It catalyses the reaction a beta-D-xylosyl-(1&lt;-&gt;1')-N-acylsphing-4-enine + cholesterol = cholesteryl 3-beta-D-xyloside + an N-acylsphing-4-enine. It carries out the reaction beta-D-xylosyl-(1&lt;-&gt;1')-N-(9Z-octadecenoyl)-sphing-4-enine + cholesterol = cholesteryl 3-beta-D-xyloside + N-(9Z-octadecenoyl)-sphing-4-enine. It functions in the pathway steroid metabolism; cholesterol metabolism. Its pathway is sphingolipid metabolism. Its activity is regulated as follows. Inhibited by conduritol B epoxide/CBE. In terms of biological role, glucosylceramidase that catalyzes, within the lysosomal compartment, the hydrolysis of glucosylceramides/GlcCers (such as beta-D-glucosyl-(1&lt;-&gt;1')-N-acylsphing-4-enine) into free ceramides (such as N-acylsphing-4-enine) and glucose. Plays a central role in the degradation of complex lipids and the turnover of cellular membranes. Through the production of ceramides, participates in the PKC-activated salvage pathway of ceramide formation. Catalyzes the glucosylation of cholesterol, through a transglucosylation reaction where glucose is transferred from GlcCer to cholesterol. GlcCer containing mono-unsaturated fatty acids (such as beta-D-glucosyl-N-(9Z-octadecenoyl)-sphing-4-enine) are preferred as glucose donors for cholesterol glucosylation when compared with GlcCer containing same chain length of saturated fatty acids (such as beta-D-glucosyl-N-octadecanoyl-sphing-4-enine). Under specific conditions, may alternatively catalyze the reverse reaction, transferring glucose from cholesteryl 3-beta-D-glucoside to ceramide. Can also hydrolyze cholesteryl 3-beta-D-glucoside producing glucose and cholesterol. Catalyzes the hydrolysis of galactosylceramides/GalCers (such as beta-D-galactosyl-(1&lt;-&gt;1')-N-acylsphing-4-enine), as well as the transfer of galactose between GalCers and cholesterol in vitro, but with lower activity than with GlcCers. Contrary to GlcCer and GalCer, xylosylceramide/XylCer (such as beta-D-xyosyl-(1&lt;-&gt;1')-N-acylsphing-4-enine) is not a good substrate for hydrolysis, however it is a good xylose donor for transxylosylation activity to form cholesteryl 3-beta-D-xyloside. In Mus musculus (Mouse), this protein is Lysosomal acid glucosylceramidase (Gba1).